The sequence spans 485 residues: Zinc finger protein 577 (485 aa).

The interval 1–21 (MKNATIVMSVRREQGSSSGEG) is disordered. The KRAB domain maps to 23–94 (LSFEDVAVGF…EGAAHSQICP (72 aa)). The C2H2-type 1; degenerate zinc finger occupies 158–180 (HECSVCGRAFSRKAQLIQHQRTE). 7 consecutive C2H2-type zinc fingers follow at residues 186-208 (HGCG…QRTH), 214-236 (HECS…QRTH), 242-264 (YRCS…QRSH), 270-292 (YGCS…QRLH), 298-320 (YKCS…QRIH), 326-348 (YECS…QRTH), and 354-376 (YSCR…EKTH).

Belongs to the krueppel C2H2-type zinc-finger protein family.

It is found in the nucleus. May be involved in transcriptional regulation. In Homo sapiens (Human), this protein is Zinc finger protein 577 (ZNF577).